We begin with the raw amino-acid sequence, 305 residues long: 4-diphosphocytidyl-2-C-methyl-D-erythritol kinase (305 aa).

Residue Lys-17 is part of the active site. Position 111 to 121 (111 to 121 (PVASGIGGGSA)) interacts with ATP. Asp-154 is a catalytic residue.

Belongs to the GHMP kinase family. IspE subfamily.

The catalysed reaction is 4-CDP-2-C-methyl-D-erythritol + ATP = 4-CDP-2-C-methyl-D-erythritol 2-phosphate + ADP + H(+). The protein operates within isoprenoid biosynthesis; isopentenyl diphosphate biosynthesis via DXP pathway; isopentenyl diphosphate from 1-deoxy-D-xylulose 5-phosphate: step 3/6. In terms of biological role, catalyzes the phosphorylation of the position 2 hydroxy group of 4-diphosphocytidyl-2C-methyl-D-erythritol. The polypeptide is 4-diphosphocytidyl-2-C-methyl-D-erythritol kinase (Gluconacetobacter diazotrophicus (strain ATCC 49037 / DSM 5601 / CCUG 37298 / CIP 103539 / LMG 7603 / PAl5)).